Here is a 301-residue protein sequence, read N- to C-terminus: B3 domain-containing protein At5g18090 (301 aa).

The TF-B3 1 DNA-binding region spans 18-113 (FFKILRSADL…CFTVDIYQID (96 aa)). 2 disordered regions span residues 123-142 (SATI…NNIY) and 153-194 (SWSE…KMKV). Positions 133-142 (NKREQRNNIY) are enriched in basic and acidic residues. The TF-B3 2 DNA-binding region spans 209–301 (VPEFTLTIKK…PTEMLVRVSK (93 aa)).

The protein localises to the nucleus. This Arabidopsis thaliana (Mouse-ear cress) protein is B3 domain-containing protein At5g18090.